The following is a 354-amino-acid chain: Probable L-ascorbate-6-phosphate lactonase UlaG (354 aa).

The protein belongs to the UlaG family. The cofactor is a divalent metal cation.

Its subcellular location is the cytoplasm. It catalyses the reaction L-ascorbate 6-phosphate + H2O = 3-dehydro-L-gulonate 6-phosphate. It functions in the pathway cofactor degradation; L-ascorbate degradation; D-xylulose 5-phosphate from L-ascorbate: step 1/4. Its function is as follows. Probably catalyzes the hydrolysis of L-ascorbate-6-P into 3-keto-L-gulonate-6-P. Is essential for L-ascorbate utilization under anaerobic conditions. The sequence is that of Probable L-ascorbate-6-phosphate lactonase UlaG from Salmonella gallinarum (strain 287/91 / NCTC 13346).